Consider the following 404-residue polypeptide: MSFPVAFLLVLFLVPFTFATNNLVVRQKELEIVIGGEVSVNFQIKNHTSQSLNATRISLSQSPYISHPDAILVDNWNANVTVLGSQLVSGAILEALNCTTDGSITCPLDLEDAFARITVIRSHFLAILIQIVGWTYFFAWSISFYPQMYLNFKRKSVVGLNFDFLSLNLVGFCAYAIFNLLMYYNSHVKNEYNIVNPRSPPPVLLNDVVFAVHAFLACFITILQCLFYERDNQSVSSKCIALMIVLISFGFCSAAATVLRKIQLLSFVTSLSYIKMAVTCCKYFPQAYFNYTRKSTVGWSIGNIMLDFTGGTLDILQMILQAVNVNDWSAFYANPVKFGLGFVSIFFDIIFMVQHYVLYPNAEVPHNEYHGVDNPNPDNIARDAEQYAGDSESMESTEPIIVHD.

Over 20–123 (TNNLVVRQKE…FARITVIRSH (104 aa)) the chain is Lumenal. 4 N-linked (GlcNAc...) asparagine glycosylation sites follow: N46, N53, N79, and N97. A helical transmembrane segment spans residues 124–144 (FLAILIQIVGWTYFFAWSISF). The PQ-loop 1 domain maps to 125–191 (LAILIQIVGW…MYYNSHVKNE (67 aa)). The Cytoplasmic segment spans residues 145-163 (YPQMYLNFKRKSVVGLNFD). Residues 164-184 (FLSLNLVGFCAYAIFNLLMYY) traverse the membrane as a helical segment. Residues 185–207 (NSHVKNEYNIVNPRSPPPVLLND) lie on the Lumenal side of the membrane. The chain crosses the membrane as a helical span at residues 208–228 (VVFAVHAFLACFITILQCLFY). Topologically, residues 229 to 238 (ERDNQSVSSK) are cytoplasmic. Residues 239-259 (CIALMIVLISFGFCSAAATVL) traverse the membrane as a helical segment. The Lumenal portion of the chain corresponds to 260–263 (RKIQ). A helical membrane pass occupies residues 264-285 (LLSFVTSLSYIKMAVTCCKYFP). The PQ-loop 2 domain maps to 266–327 (SFVTSLSYIK…MILQAVNVND (62 aa)). Residues 286-295 (QAYFNYTRKS) are Cytoplasmic-facing. The helical transmembrane segment at 296–316 (TVGWSIGNIMLDFTGGTLDIL) threads the bilayer. The Lumenal segment spans residues 317–337 (QMILQAVNVNDWSAFYANPVK). A helical transmembrane segment spans residues 338 to 358 (FGLGFVSIFFDIIFMVQHYVL). The Cytoplasmic segment spans residues 359–404 (YPNAEVPHNEYHGVDNPNPDNIARDAEQYAGDSESMESTEPIIVHD).

Belongs to the cystinosin family.

The protein localises to the lysosome membrane. The protein resides in the cytoplasmic vesicle. It is found in the phagosome. It carries out the reaction L-cystine(out) + H(+)(out) = L-cystine(in) + H(+)(in). Cystine/H(+) symporter that mediates export of cystine, the oxidized dimer of cysteine, from lysosomes. May play a role in the degradation of engulfed apoptotic cells. The chain is Cystinosin homolog (ctns-1) from Caenorhabditis elegans.